The following is a 938-amino-acid chain: Isoleucine--tRNA ligase (938 aa).

Residues 58–68 carry the 'HIGH' region motif; it reads PYANGNIHIGH. L-isoleucyl-5'-AMP is bound at residue E561. The 'KMSKS' region motif lies at 602–606; that stretch reads KMSKS. K605 provides a ligand contact to ATP. Positions 901, 904, 921, and 924 each coordinate Zn(2+).

This sequence belongs to the class-I aminoacyl-tRNA synthetase family. IleS type 1 subfamily. Monomer. The cofactor is Zn(2+).

The protein localises to the cytoplasm. It carries out the reaction tRNA(Ile) + L-isoleucine + ATP = L-isoleucyl-tRNA(Ile) + AMP + diphosphate. Its function is as follows. Catalyzes the attachment of isoleucine to tRNA(Ile). As IleRS can inadvertently accommodate and process structurally similar amino acids such as valine, to avoid such errors it has two additional distinct tRNA(Ile)-dependent editing activities. One activity is designated as 'pretransfer' editing and involves the hydrolysis of activated Val-AMP. The other activity is designated 'posttransfer' editing and involves deacylation of mischarged Val-tRNA(Ile). The sequence is that of Isoleucine--tRNA ligase from Yersinia pestis bv. Antiqua (strain Angola).